Consider the following 28-residue polypeptide: Conotoxin Cl9b (28 aa).

2 positions are modified to 4-hydroxyproline: proline 17 and proline 28.

Post-translationally, contains 3 disulfide bonds. As to expression, expressed by the venom duct.

Its subcellular location is the secreted. This Californiconus californicus (California cone) protein is Conotoxin Cl9b.